The primary structure comprises 164 residues: Aspartic proteinase nepenthesin-1 (164 aa).

The Peptidase A1 domain maps to 17 to 164 (YLMXLSIGTP…VSFVSAQCGA (148 aa)). Asp-35 is a catalytic residue. The N-linked (GlcNAc...) asparagine glycan is linked to Asn-93.

Belongs to the peptidase A1 family. In terms of tissue distribution, parenchymal cells surrounding the secretory glands.

The protein localises to the secreted. It catalyses the reaction Similar to pepsin, but also cleaves on either side of Asp and at Lys-|-Arg.. Inhibited by pepstatin and by diazoacetyl-D,L-norleucine methyl ester (DAN) in the presence of Cu(2+) ions. Its function is as follows. Extracellular proteinase found in the pitcher fluid of carnivorous plants. Digest prey for nitrogen uptake. In Nepenthes distillatoria (Pitcher plant), this protein is Aspartic proteinase nepenthesin-1.